The following is a 30-amino-acid chain: Cysteine-rich venom protein annuliferin-a (30 aa).

Belongs to the CRISP family. Post-translationally, contains 8 disulfide bonds. In terms of tissue distribution, expressed by the venom gland.

The protein localises to the secreted. In terms of biological role, inhibits calcium-activated potassium channels (KCa), voltage-gated potassium channel (Kv), and the calcium release channel/ryanodine receptor (RyR). The sequence is that of Cysteine-rich venom protein annuliferin-a from Naja annulifera (Banded Egyptian cobra).